We begin with the raw amino-acid sequence, 376 residues long: Queuine tRNA-ribosyltransferase (376 aa).

Asp-93 serves as the catalytic Proton acceptor. Substrate is bound by residues 93-97 (DSGGF), Asp-147, Gln-190, and Gly-217. The tract at residues 248–254 (GVGKPDD) is RNA binding. Asp-267 serves as the catalytic Nucleophile. Cys-305, Cys-307, Cys-310, and His-336 together coordinate Zn(2+).

The protein belongs to the queuine tRNA-ribosyltransferase family. Homodimer. Within each dimer, one monomer is responsible for RNA recognition and catalysis, while the other monomer binds to the replacement base PreQ1. Requires Zn(2+) as cofactor.

It catalyses the reaction 7-aminomethyl-7-carbaguanine + guanosine(34) in tRNA = 7-aminomethyl-7-carbaguanosine(34) in tRNA + guanine. It functions in the pathway tRNA modification; tRNA-queuosine biosynthesis. Functionally, catalyzes the base-exchange of a guanine (G) residue with the queuine precursor 7-aminomethyl-7-deazaguanine (PreQ1) at position 34 (anticodon wobble position) in tRNAs with GU(N) anticodons (tRNA-Asp, -Asn, -His and -Tyr). Catalysis occurs through a double-displacement mechanism. The nucleophile active site attacks the C1' of nucleotide 34 to detach the guanine base from the RNA, forming a covalent enzyme-RNA intermediate. The proton acceptor active site deprotonates the incoming PreQ1, allowing a nucleophilic attack on the C1' of the ribose to form the product. After dissociation, two additional enzymatic reactions on the tRNA convert PreQ1 to queuine (Q), resulting in the hypermodified nucleoside queuosine (7-(((4,5-cis-dihydroxy-2-cyclopenten-1-yl)amino)methyl)-7-deazaguanosine). The protein is Queuine tRNA-ribosyltransferase of Ruegeria sp. (strain TM1040) (Silicibacter sp.).